The primary structure comprises 474 residues: Pyruvate kinase (474 aa).

Residue arginine 33 participates in substrate binding. The K(+) site is built by asparagine 35, serine 37, and aspartate 67. Asparagine 35–histidine 38 is a binding site for ATP. Arginine 74 and lysine 155 together coordinate ATP. Position 220 (glutamate 220) interacts with Mg(2+). 3 residues coordinate substrate: glycine 243, aspartate 244, and threonine 276. Aspartate 244 is a Mg(2+) binding site.

This sequence belongs to the pyruvate kinase family. As to quaternary structure, homotetramer. Requires Mg(2+) as cofactor. K(+) is required as a cofactor.

The enzyme catalyses pyruvate + ATP = phosphoenolpyruvate + ADP + H(+). It functions in the pathway carbohydrate degradation; glycolysis; pyruvate from D-glyceraldehyde 3-phosphate: step 5/5. This is Pyruvate kinase (pyk) from Corynebacterium efficiens (strain DSM 44549 / YS-314 / AJ 12310 / JCM 11189 / NBRC 100395).